Here is a 243-residue protein sequence, read N- to C-terminus: uncharacterized protein (243 aa).

Belongs to the methyltransferase superfamily.

This is an uncharacterized protein from Mycobacterium tuberculosis (strain CDC 1551 / Oshkosh).